The chain runs to 328 residues: GMP reductase (328 aa).

Cys-176 (thioimidate intermediate) is an active-site residue. Position 205-228 (205-228) interacts with NADP(+); sequence IIADGGIRTHGDIAKSIRFGASMI.

Belongs to the IMPDH/GMPR family. GuaC type 2 subfamily.

The enzyme catalyses IMP + NH4(+) + NADP(+) = GMP + NADPH + 2 H(+). In terms of biological role, catalyzes the irreversible NADPH-dependent deamination of GMP to IMP. It functions in the conversion of nucleobase, nucleoside and nucleotide derivatives of G to A nucleotides, and in maintaining the intracellular balance of A and G nucleotides. The sequence is that of GMP reductase from Streptococcus pneumoniae (strain ATCC 700669 / Spain 23F-1).